Consider the following 331-residue polypeptide: Geranylgeranyl transferase type-2 subunit beta (331 aa).

Position 2 is an N-acetylglycine (glycine 2). Position 3 is a phosphothreonine (threonine 3). 6 PFTB repeats span residues 20 to 61 (LEKH…DLMG), 68 to 109 (REEI…TLYD), 116 to 157 (INKV…ALLG), 164 to 205 (VEKA…AITS), 212 to 253 (SDLL…KIIG), and 260 to 302 (REKL…SLLG). 190–192 (HAG) lines the geranylgeranyl diphosphate pocket. The Zn(2+) site is built by aspartate 238 and cysteine 240. A geranylgeranyl diphosphate-binding site is contributed by 241 to 244 (YSWW). Histidine 290 lines the Zn(2+) pocket.

Belongs to the protein prenyltransferase subunit beta family. As to quaternary structure, heterotrimer composed of RABGGTA, RABGGTB and CHM; within this trimer, RABGGTA and RABGGTB form the catalytic component B, while CHM (component A) mediates peptide substrate binding. The Rab GGTase dimer (RGGT) interacts with CHM (component A) prior to Rab protein binding; the association is stabilized by geranylgeranyl pyrophosphate (GGpp). The CHM:RGGT:Rab complex is destabilized by GGpp. Interaction of RABGGTB with prenylated PTP4A2 precludes its association with RABGGTA and inhibits enzyme activity. Interacts with CHODL. Interacts with non-phosphorylated form of RAB8A; phosphorylation of RAB8A at 'Thr-72' disrupts this interaction. It depends on Zn(2+) as a cofactor.

The enzyme catalyses geranylgeranyl diphosphate + L-cysteinyl-[protein] = S-geranylgeranyl-L-cysteinyl-[protein] + diphosphate. Its activity is regulated as follows. The enzymatic reaction requires the aid of a Rab escort protein (also called component A). Its function is as follows. Catalyzes the transfer of a geranylgeranyl moiety from geranylgeranyl diphosphate to both cysteines of Rab proteins with the C-terminal sequence -XXCC, -XCXC and -CCXX, such as RAB1A, RAB3A, RAB5A and RAB7A. The polypeptide is Geranylgeranyl transferase type-2 subunit beta (RABGGTB) (Bos taurus (Bovine)).